The sequence spans 751 residues: Semaphorin-3C (751 aa).

A signal peptide spans 1–20 (MAFRAICVLVGVFICSICVR). Residues 28-511 (RVYLTFDELR…SNEGVSQVSL (484 aa)) enclose the Sema domain. The N-linked (GlcNAc...) asparagine glycan is linked to N81. Residues C101 and C112 are joined by a disulfide bond. A glycan (N-linked (GlcNAc...) asparagine) is linked at N123. C130 and C139 are disulfide-bonded. N-linked (GlcNAc...) asparagine glycosylation is found at N252 and N268. 2 cysteine pairs are disulfide-bonded: C266–C378 and C290–C338. N465 is a glycosylation site (N-linked (GlcNAc...) asparagine). An intrachain disulfide couples C514 to C532. Positions 571 to 655 (AYRNAAEIVQ…TENSFKQTIA (85 aa)) constitute an Ig-like C2-type domain. N-linked (GlcNAc...) asparagine glycans are attached at residues N585 and N586. Residues C643 and C709 are joined by a disulfide bond.

The protein belongs to the semaphorin family. As to quaternary structure, interacts with PLXND1.

It localises to the secreted. Functionally, binds to plexin family members and plays an important role in the regulation of developmental processes. Required for normal cardiovascular development during embryogenesis. Functions as attractant for growing axons, and thereby plays an important role in axon growth and axon guidance. The protein is Semaphorin-3C (Sema3c) of Mus musculus (Mouse).